A 135-amino-acid chain; its full sequence is UPF0216 protein MTH_949 (135 aa).

The protein belongs to the UPF0216 family.

This chain is UPF0216 protein MTH_949, found in Methanothermobacter thermautotrophicus (strain ATCC 29096 / DSM 1053 / JCM 10044 / NBRC 100330 / Delta H) (Methanobacterium thermoautotrophicum).